The primary structure comprises 399 residues: Elongation factor Tu (399 aa).

The tr-type G domain occupies 10 to 209 (KPHVNIGTIG…EVDAYIPTPE (200 aa)). The G1 stretch occupies residues 19–26 (GHVDHGKT). Residue 19 to 26 (GHVDHGKT) participates in GTP binding. Residue threonine 26 coordinates Mg(2+). The G2 stretch occupies residues 60–64 (GITIA). Residues 81 to 84 (DCPG) are G3. GTP is bound by residues 81–85 (DCPGH) and 136–139 (NKQD). The segment at 136 to 139 (NKQD) is G4. The G5 stretch occupies residues 174-176 (SAL).

Belongs to the TRAFAC class translation factor GTPase superfamily. Classic translation factor GTPase family. EF-Tu/EF-1A subfamily. Monomer.

The protein resides in the cytoplasm. The enzyme catalyses GTP + H2O = GDP + phosphate + H(+). Its function is as follows. GTP hydrolase that promotes the GTP-dependent binding of aminoacyl-tRNA to the A-site of ribosomes during protein biosynthesis. The sequence is that of Elongation factor Tu from Helicobacter pylori (strain ATCC 700392 / 26695) (Campylobacter pylori).